Here is a 320-residue protein sequence, read N- to C-terminus: Homoserine kinase (320 aa).

An ATP-binding site is contributed by 100–110 (PLSSGMGSSAA).

Belongs to the GHMP kinase family. Homoserine kinase subfamily.

The protein localises to the cytoplasm. It catalyses the reaction L-homoserine + ATP = O-phospho-L-homoserine + ADP + H(+). It participates in amino-acid biosynthesis; L-threonine biosynthesis; L-threonine from L-aspartate: step 4/5. Functionally, catalyzes the ATP-dependent phosphorylation of L-homoserine to L-homoserine phosphate. The protein is Homoserine kinase of Chlorobium phaeovibrioides (strain DSM 265 / 1930) (Prosthecochloris vibrioformis (strain DSM 265)).